The chain runs to 382 residues: Chaperone protein DnaJ (382 aa).

The region spanning 5–70 (DYYDLLGLSK…DKRAAYDRYG (66 aa)) is the J domain. The CR-type zinc finger occupies 138-216 (GTKVPINYVT…CSGSGRVRDE (79 aa)). Residues cysteine 151, cysteine 154, cysteine 168, cysteine 171, cysteine 190, cysteine 193, cysteine 204, and cysteine 207 each contribute to the Zn(2+) site. CXXCXGXG motif repeat units lie at residues 151 to 158 (CSSCSGSG), 168 to 175 (CNTCHGAG), 190 to 197 (CHVCNGEG), and 204 to 211 (CKKCSGSG).

The protein belongs to the DnaJ family. As to quaternary structure, homodimer. Requires Zn(2+) as cofactor.

Its subcellular location is the cytoplasm. Its function is as follows. Participates actively in the response to hyperosmotic and heat shock by preventing the aggregation of stress-denatured proteins and by disaggregating proteins, also in an autonomous, DnaK-independent fashion. Unfolded proteins bind initially to DnaJ; upon interaction with the DnaJ-bound protein, DnaK hydrolyzes its bound ATP, resulting in the formation of a stable complex. GrpE releases ADP from DnaK; ATP binding to DnaK triggers the release of the substrate protein, thus completing the reaction cycle. Several rounds of ATP-dependent interactions between DnaJ, DnaK and GrpE are required for fully efficient folding. Also involved, together with DnaK and GrpE, in the DNA replication of plasmids through activation of initiation proteins. The chain is Chaperone protein DnaJ from Ehrlichia ruminantium (strain Welgevonden).